Consider the following 428-residue polypeptide: Adenylosuccinate synthetase (428 aa).

Residues 12-18 (GDEGKGK) and 40-42 (GHT) contribute to the GTP site. The active-site Proton acceptor is aspartate 13. Mg(2+) contacts are provided by aspartate 13 and glycine 40. IMP-binding positions include 13-16 (DEGK), 38-41 (NAGH), threonine 130, arginine 144, glutamine 225, threonine 240, and arginine 304. The active-site Proton donor is histidine 41. Substrate is bound at residue 300–306 (VTTGRSR). GTP contacts are provided by residues arginine 306, 332 to 334 (KID), and 414 to 416 (GVG).

This sequence belongs to the adenylosuccinate synthetase family. In terms of assembly, homodimer. Mg(2+) is required as a cofactor.

It is found in the cytoplasm. It carries out the reaction IMP + L-aspartate + GTP = N(6)-(1,2-dicarboxyethyl)-AMP + GDP + phosphate + 2 H(+). It participates in purine metabolism; AMP biosynthesis via de novo pathway; AMP from IMP: step 1/2. Plays an important role in the de novo pathway of purine nucleotide biosynthesis. Catalyzes the first committed step in the biosynthesis of AMP from IMP. This Clostridium botulinum (strain Eklund 17B / Type B) protein is Adenylosuccinate synthetase.